Here is a 206-residue protein sequence, read N- to C-terminus: Somatotropin (206 aa).

Positions 1-18 (MLDRVVVLLSVLCLGVSS) are cleaved as a signal peptide. Glutamine 19 is subject to Pyrrolidone carboxylic acid. Position 37 (histidine 37) interacts with Zn(2+). Cysteine 70 and cysteine 179 are disulfide-bonded. Glutamate 188 provides a ligand contact to Zn(2+). The cysteines at positions 196 and 204 are disulfide-linked.

This sequence belongs to the somatotropin/prolactin family.

The protein localises to the secreted. In terms of biological role, growth hormone plays an important role in growth control and is involved in the regulation of several anabolic processes. Implicated as an osmoregulatory substance important for seawater adaptation. This Pseudocaranx dentex (White trevally) protein is Somatotropin (gh).